Consider the following 1207-residue polypeptide: Plasma membrane calcium-transporting ATPase 4 (1207 aa).

The Cytoplasmic segment spans residues 1 to 100 (MTNPTEHTLP…KTFLELVWEA (100 aa)). Position 13 is a phosphoserine (serine 13). The helical transmembrane segment at 101-121 (LQDVTLIILEIAAIISLVLSF) threads the bilayer. Residues 122 to 147 (YRPPGGENEQCGLAVTSPEDEGEAEA) lie on the Extracellular side of the membrane. Residues 148 to 168 (GWIEGAAILFSVIIVVLVTAF) traverse the membrane as a helical segment. Residues 169–368 (NDWSKEKQFR…LAVQIGKAGL (200 aa)) lie on the Cytoplasmic side of the membrane. A disordered region spans residues 294-317 (EEEKKKKGKKQGVPENRNKAKTQD). Serine 328 and serine 334 each carry phosphoserine. The helical transmembrane segment at 369–389 (IMSAITVLILILYFVIDNFVI) threads the bilayer. The Extracellular segment spans residues 390 to 408 (QRRPWLAECTPIYVQYFVK). Residues 409–429 (FFIIGVTVLVVAVPEGLPLAV) form a helical membrane-spanning segment. Residues 430–843 (TISLAYSVKK…RNVYDSISKF (414 aa)) lie on the Cytoplasmic side of the membrane. The active-site 4-aspartylphosphate intermediate is the aspartate 465. Positions 785 and 789 each coordinate Mg(2+). A helical membrane pass occupies residues 844–864 (LQFQLTVNVVAVIVAFTGACI). The Extracellular segment spans residues 865–871 (TQDSPLK). Residues 872 to 892 (AVQMLWVNLIMDTFASLALAT) form a helical membrane-spanning segment. The Cytoplasmic portion of the chain corresponds to 893-918 (EPPTDSLLKRRPYGRNKPLISRTMMK). The chain crosses the membrane as a helical span at residues 919–939 (NILGHAVYQLTVIFFLVFAGE). Residues 940-957 (KFFDIDSGRRAPLHSPPS) are Extracellular-facing. The helical transmembrane segment at 958 to 977 (QHYTIIFNTFVLMQLFNEIN) threads the bilayer. At 978–994 (SRKIHGERNVFSGIFRN) the chain is on the cytoplasmic side. A helical membrane pass occupies residues 995–1015 (LIFCSVVLGTFISQIIIVEFG). Residues 1016–1028 (GKPFSCTKLTLSQ) are Extracellular-facing. A helical membrane pass occupies residues 1029–1049 (WFWCLFIGIGELLWGQVISTI). The Cytoplasmic segment spans residues 1050–1207 (PTQSLKFLKE…SPLHSLETSV (158 aa)). The interval 1086 to 1103 (LRRGQILWFRGLNRIQTQ) is calmodulin-binding subdomain A. At threonine 1102 the chain carries Phosphothreonine; by PKC. The tract at residues 1104-1113 (IKVVKAFHSS) is calmodulin-binding subdomain B. Residues 1159 to 1181 (VSKPGTKTSSLDGEVTPQTNKNN) form a disordered region. Residues 1163-1181 (GTKTSSLDGEVTPQTNKNN) are compositionally biased toward polar residues.

Belongs to the cation transport ATPase (P-type) (TC 3.A.3) family. Type IIB subfamily. As to quaternary structure, interacts with PDZD11. Interacts with SLC35G1 and STIM1. Interacts with calmodulin. Isoform 1 is detected in brain, heart, liver, testis and epididymis. Isoform 2 is detected in brain (at protein level), heart, seminal vesicle and epididymis. There is a shift in expression from isoform 1 to isoform 2 along the length of the epididymis from caput to cauda (at protein level).

Its subcellular location is the cell membrane. It is found in the cell projection. It localises to the cilium. The protein resides in the flagellum membrane. The catalysed reaction is Ca(2+)(in) + ATP + H2O = Ca(2+)(out) + ADP + phosphate + H(+). Activated by calcium/calmodulin. In terms of biological role, calcium/calmodulin-regulated and magnesium-dependent enzyme that catalyzes the hydrolysis of ATP coupled with the transport of calcium out of the cell. By regulating sperm cells calcium homeostasis, may play a role in sperm motility. In Bos taurus (Bovine), this protein is Plasma membrane calcium-transporting ATPase 4.